A 425-amino-acid polypeptide reads, in one-letter code: MQMMKKRILLCLLVGMTCLPVLAQFRVEVSGVGLTQLPIAVSAFRGQDSVPQKIAAIVQADLERSGQFRGVDTVGAALDEGTRPDVALWRQKGADSLVTGSVSRLADGRYDVRFRLWDVVRGQDLGGQSYAVTQADLRLSAHRIADFIYEKLTGDKGAFSTRITYVTKAAQRYQLWVADADGENAQSALASPEPIISPAWSPNGSQIAYVSFESRKPVVYTHDVATGKRRLIANFRGSNSAPAWSPDGRTLAVTLSRDGGSQLYAIDAGGGEPRRLAQNSSIDTEPVYAPDGKNIYFVSDRGGAPQIYRMPVTGGGAERVTFTGTYNISPAISPDGRWLAYISRVSGAFKLHVLELASGAVTAITDTTADESPSFAPNSRLIVYATQSQGREALMTATVDGKVKARLAGQNGDIREPGWGPFQKQ.

A signal peptide spans 1–23 (MQMMKKRILLCLLVGMTCLPVLA).

It belongs to the TolB family. In terms of assembly, the Tol-Pal system is composed of five core proteins: the inner membrane proteins TolA, TolQ and TolR, the periplasmic protein TolB and the outer membrane protein Pal. They form a network linking the inner and outer membranes and the peptidoglycan layer.

It localises to the periplasm. Part of the Tol-Pal system, which plays a role in outer membrane invagination during cell division and is important for maintaining outer membrane integrity. This Albidiferax ferrireducens (strain ATCC BAA-621 / DSM 15236 / T118) (Rhodoferax ferrireducens) protein is Tol-Pal system protein TolB.